A 389-amino-acid chain; its full sequence is viridiflorene synthase Agr2 (389 aa).

An N-terminal signal peptide occupies residues 1–15 (MVWDFVLSLFHSLLA). Asp-128, Asn-263, Ser-267, and Glu-271 together coordinate Mg(2+). The DDXXD motif signature appears at 128-132 (DEVTD). Residues Arg-360 and Tyr-361 each coordinate (2E,6E)-farnesyl diphosphate.

It belongs to the terpene synthase family. Requires Mg(2+) as cofactor.

The enzyme catalyses (2E,6E)-farnesyl diphosphate = viridiflorene + diphosphate. In terms of biological role, terpene cyclase that catalyzes the cyclization of farnesyl diphosphate (FPP) to viridiflorene. The protein is viridiflorene synthase Agr2 of Cyclocybe aegerita (Black poplar mushroom).